Consider the following 119-residue polypeptide: Large ribosomal subunit protein bL20 (119 aa).

This sequence belongs to the bacterial ribosomal protein bL20 family.

In terms of biological role, binds directly to 23S ribosomal RNA and is necessary for the in vitro assembly process of the 50S ribosomal subunit. It is not involved in the protein synthesizing functions of that subunit. This chain is Large ribosomal subunit protein bL20, found in Lactococcus lactis subsp. cremoris (strain MG1363).